A 329-amino-acid polypeptide reads, in one-letter code: Diaminopimelate epimerase (329 aa).

Substrate contacts are provided by asparagine 14 and asparagine 73. Cysteine 82 acts as the Proton donor in catalysis. Substrate contacts are provided by residues 83-84 (GN), asparagine 170, asparagine 206, and 224-225 (ER). Cysteine 233 acts as the Proton acceptor in catalysis. 234–235 (GT) contributes to the substrate binding site.

Belongs to the diaminopimelate epimerase family. In terms of assembly, homodimer.

It localises to the cytoplasm. It carries out the reaction (2S,6S)-2,6-diaminopimelate = meso-2,6-diaminopimelate. It participates in amino-acid biosynthesis; L-lysine biosynthesis via DAP pathway; DL-2,6-diaminopimelate from LL-2,6-diaminopimelate: step 1/1. Its function is as follows. Catalyzes the stereoinversion of LL-2,6-diaminopimelate (L,L-DAP) to meso-diaminopimelate (meso-DAP), a precursor of L-lysine and an essential component of the bacterial peptidoglycan. The sequence is that of Diaminopimelate epimerase from Listeria monocytogenes serotype 4b (strain CLIP80459).